The chain runs to 129 residues: M-zodatoxin-Lt8l (129 aa).

A signal peptide spans Met-1–Ser-20. Residues Lys-21 to Arg-60 constitute a propeptide that is removed on maturation.

Belongs to the cationic peptide 06 (cytoinsectotoxin) family. In terms of tissue distribution, expressed by the venom gland.

Its subcellular location is the secreted. In terms of biological role, insecticidal, cytolytic and antimicrobial peptide. Forms voltage-dependent, ion-permeable channels in membranes. At high concentration causes cell membrane lysis. The polypeptide is M-zodatoxin-Lt8l (cit 1-12) (Lachesana tarabaevi (Spider)).